A 430-amino-acid chain; its full sequence is Glutamate-1-semialdehyde 2,1-aminomutase (430 aa).

Lys-269 is modified (N6-(pyridoxal phosphate)lysine).

It belongs to the class-III pyridoxal-phosphate-dependent aminotransferase family. HemL subfamily. In terms of assembly, homodimer. Pyridoxal 5'-phosphate serves as cofactor.

The protein resides in the cytoplasm. The enzyme catalyses (S)-4-amino-5-oxopentanoate = 5-aminolevulinate. It participates in porphyrin-containing compound metabolism; protoporphyrin-IX biosynthesis; 5-aminolevulinate from L-glutamyl-tRNA(Glu): step 2/2. The polypeptide is Glutamate-1-semialdehyde 2,1-aminomutase (Desulfitobacterium hafniense (strain DSM 10664 / DCB-2)).